The sequence spans 239 residues: MVQHLTAEEIIQYISDAKKSTPIKVYLNGNFEGITYPESFKVFGSEQSKVIFCEADDWKPFYETYGSQFEDIEIEMDRRNSAIPLKDLTNTNARIEPGAFIREQAIIEDGAVVMMGATINIGAVVGEGTMIDMNATLGGRATTGKNVHVGAGAVLAGVIEPPSASPVIIEDDVLIGANAVILEGVRVGKGAIVAAGAIVTQDVPAGTVVAGTPAKVIKQASEVQDTKKEIVAALRKLND.

This sequence belongs to the transferase hexapeptide repeat family. DapH subfamily.

The catalysed reaction is (S)-2,3,4,5-tetrahydrodipicolinate + acetyl-CoA + H2O = L-2-acetamido-6-oxoheptanedioate + CoA. Its pathway is amino-acid biosynthesis; L-lysine biosynthesis via DAP pathway; LL-2,6-diaminopimelate from (S)-tetrahydrodipicolinate (acetylase route): step 1/3. Functionally, catalyzes the transfer of an acetyl group from acetyl-CoA to tetrahydrodipicolinate. The chain is 2,3,4,5-tetrahydropyridine-2,6-dicarboxylate N-acetyltransferase from Staphylococcus aureus (strain bovine RF122 / ET3-1).